A 313-amino-acid chain; its full sequence is Ribosomal RNA small subunit methyltransferase H (313 aa).

Residues 35–37 (GGH), aspartate 55, phenylalanine 79, aspartate 101, and glutamine 108 contribute to the S-adenosyl-L-methionine site.

It belongs to the methyltransferase superfamily. RsmH family.

The protein localises to the cytoplasm. The enzyme catalyses cytidine(1402) in 16S rRNA + S-adenosyl-L-methionine = N(4)-methylcytidine(1402) in 16S rRNA + S-adenosyl-L-homocysteine + H(+). Its function is as follows. Specifically methylates the N4 position of cytidine in position 1402 (C1402) of 16S rRNA. The protein is Ribosomal RNA small subunit methyltransferase H of Escherichia coli O81 (strain ED1a).